The primary structure comprises 250 residues: MSDVSPSVLFEHPLNEKMRTWLRMEFLLQQLHGQRALSETAIALTFFRTVADLLDVLERGEVRTELLKELERQQQKLLAWADVPGVDMSLVDQLRNQLKQRGAALMSAPRLGQSLREDRLISLVRQRLSIPGGCCSFDLPTLHMWMHAPQQERDDDVANWQQTLEPLNQALTMVLDLIRQSGQFRNQISLNGFFQDNAEGADLLRLRINLAHQLYPQISGHKTRYAIRFLPLDSELGVVPERLTFELACC.

It belongs to the ZapD family. Interacts with FtsZ.

It is found in the cytoplasm. In terms of biological role, cell division factor that enhances FtsZ-ring assembly. Directly interacts with FtsZ and promotes bundling of FtsZ protofilaments, with a reduction in FtsZ GTPase activity. This is Cell division protein ZapD from Serratia proteamaculans (strain 568).